Consider the following 470-residue polypeptide: Ubiquitin carboxyl-terminal hydrolase calypso (470 aa).

Residues 11–241 (GWLELESDPG…ITHKLKMLRT (231 aa)) form the UCH catalytic domain. The active-site Nucleophile is the C98. Residue H177 is the Proton donor of the active site. Residues 260-280 (ESRSQAEIRETVDKIKKEEQE) are a coiled coil. The 29-residue stretch at 392–420 (NYDEFICTFLSMLAYQGELGDLVTQHLVT) folds into the ULD domain. Residues 422–470 (RKPSLGGVQNSGSRGVVRNYNKKSTTNGSSPKTPSSKRRRGRTKYRKRK) form a positively charged C-terminal tail required for binding nucleosomes region. Polar residues predominate over residues 423-434 (KPSLGGVQNSGS). A disordered region spans residues 423-470 (KPSLGGVQNSGSRGVVRNYNKKSTTNGSSPKTPSSKRRRGRTKYRKRK). Over residues 456–470 (SSKRRRGRTKYRKRK) the composition is skewed to basic residues.

Belongs to the peptidase C12 family. BAP1 subfamily. Catalytic component of the polycomb repressive deubiquitinase (PR-DUB) complex, at least composed of caly/calypso, Asx and sba (MBD5/6 homolog). The PR-DUB complex associates with nucleosomes to mediate deubiquitination of histone H2AK118ub1 substrates; the association requires the positively charged C-terminal tail of caly, probably due to direct binding of DNA. Interacts (via ULD domain) with Asx (via DEUBAD domain); the interaction produces a stable heterodimer with a composite binding site for ubiquitin. Homodimerizes (via coiled-coil hinge-region between the UCH and ULD domains) to mediate assembly of 2 copies of the caly-Asx heterodimer into a bisymmetric tetramer; dimerization enhances PR-DUB association with nucleosomes.

Its subcellular location is the nucleus. It catalyses the reaction Thiol-dependent hydrolysis of ester, thioester, amide, peptide and isopeptide bonds formed by the C-terminal Gly of ubiquitin (a 76-residue protein attached to proteins as an intracellular targeting signal).. Catalytic component of the polycomb repressive deubiquitinase (PR-DUB) complex, a complex that specifically mediates deubiquitination of histone H2A monoubiquitinated at 'Lys-119' (H2AK118ub1). Mediates bisymmetric organization of the PR-DUB complex and is involved in association with nucleosomes to mediate deubiquitination. Does not deubiquitinate monoubiquitinated histone H2B. Required to maintain the transcriptionally repressive state of homeotic genes throughout development. The PR-DUB complex has weak or no activity toward 'Lys-48'- and 'Lys-63'-linked polyubiquitin chains. Polycomb group (PcG) protein. The sequence is that of Ubiquitin carboxyl-terminal hydrolase calypso from Culex quinquefasciatus (Southern house mosquito).